The following is a 469-amino-acid chain: Putative dipeptidase SAR1836 (469 aa).

H84 serves as a coordination point for Zn(2+). Residue D86 is part of the active site. D115 is a Zn(2+) binding site. E149 functions as the Proton acceptor in the catalytic mechanism. Positions 150, 173, and 440 each coordinate Zn(2+).

This sequence belongs to the peptidase M20A family. Requires Zn(2+) as cofactor.

The protein is Putative dipeptidase SAR1836 of Staphylococcus aureus (strain MRSA252).